Consider the following 570-residue polypeptide: Conserved oligomeric Golgi complex subunit 8 (570 aa).

It belongs to the COG8 family. Component of the conserved oligomeric Golgi complex which is composed of eight different subunits and is required for normal Golgi morphology and localization.

The protein resides in the golgi apparatus membrane. Its function is as follows. Required for normal Golgi function. The protein is Conserved oligomeric Golgi complex subunit 8 of Drosophila melanogaster (Fruit fly).